A 481-amino-acid polypeptide reads, in one-letter code: MADMPSGESCTSPLELFNSIAAQGELVRSLKAGNAPKDEIESAVKMLLSLKMNYKTAMGEEYKAGCPPGNSTAGSNGDPDATKASEDFVDPWTVRTSSAKGIDYDKLIVQFGSSKIDKELINRIERATGQRPHRFLRRGIFFSHRDMNQILDAYENKKPFYLYTGRGPSSEAMHLGHLVPFIFTKWLQDVFDVPLVIQMSDDEKYLWKDLTLEQAYSYTVENAKDIIACGFDVNKTFIFSDLEYMGQSPGFYKNVVKIQKHVTFNQVKGIFGFTDSDCIGKISFPAVQAAPSFSNSFPKIFRDRTDIQCLIPCAIDQDPYFRMTRDVAPRIGHPKPALLHSTFFPALQGAQTKMSASDPNSSIFLTDTAKQIKSKVNKHAFSGGRDTVEEHRQFGGNCEVDVSFMYLTFFLEDDDSLEQIRKDYTSGAMLTGELKKTLIDVLQPLIAEHQARRKAVTEETVKEFMAPRQLSFHFQCFCFDT.

The WHEP-TRS domain occupies 12–68 (SPLELFNSIAAQGELVRSLKAGNAPKDEIESAVKMLLSLKMNYKTAMGEEYKAGCPP). Positions 65-85 (GCPPGNSTAGSNGDPDATKAS) are disordered. Residue K158 is modified to N6-succinyllysine. Positions 168 to 177 (PSSEAMHLGH) match the 'HIGH' region motif. Positions 353 to 357 (KMSAS) match the 'KMSKS' region motif. Position 355 is a phosphoserine (S355).

It belongs to the class-I aminoacyl-tRNA synthetase family. As to quaternary structure, homodimer. Interacts with oxidized form of GAPDH. Proteolytic cleavage generates 2 forms; T1-TrpRS and T2-TrpRS.

Its subcellular location is the cytoplasm. The catalysed reaction is tRNA(Trp) + L-tryptophan + ATP = L-tryptophyl-tRNA(Trp) + AMP + diphosphate + H(+). Functionally, catalyzes the attachment of tryptophan to tRNA(Trp) in a two-step reaction: tryptophan is first activated by ATP to form Trp-AMP and then transferred to the acceptor end of the tRNA(Trp). Could also possess an angiostatic activity. This chain is Tryptophan--tRNA ligase, cytoplasmic, found in Rattus norvegicus (Rat).